The chain runs to 288 residues: MTQHFIVIGNPIAHSKSPEIHTLFGTQAGLDICYQRQYCPDDAASFTAVIEAFFHGGGVGANVTVPFKQIAYECCAARGGLSEHAKVAGAVNTLLLNKALLAKGVPPVEALFGDNTDGQGLVNHMQRLGWPLNGARVAIIGAGGAARGVVLPLIEAGIETLSIANRTVSKAEILVDELSTASEKINQHTIQTYATADLSGDFDIIINATSIGLSGETLPLTDKLNCQYAYDMMYGRELPFLQHFSIRGAQTSDGYGMLIGQAALSFERWTGRAIDVAQATTALENVST.

Shikimate-binding positions include 15 to 17 and Thr-64; that span reads SKS. Lys-68 functions as the Proton acceptor in the catalytic mechanism. Glu-83 is a binding site for NADP(+). Positions 92 and 117 each coordinate shikimate. NADP(+) is bound by residues 141–145, 165–170, and Met-232; these read GAGGA and NRTVSK. Tyr-234 is a binding site for shikimate. Gly-254 is a binding site for NADP(+).

The protein belongs to the shikimate dehydrogenase family. Homodimer.

It carries out the reaction shikimate + NADP(+) = 3-dehydroshikimate + NADPH + H(+). Its pathway is metabolic intermediate biosynthesis; chorismate biosynthesis; chorismate from D-erythrose 4-phosphate and phosphoenolpyruvate: step 4/7. Involved in the biosynthesis of the chorismate, which leads to the biosynthesis of aromatic amino acids. Catalyzes the reversible NADPH linked reduction of 3-dehydroshikimate (DHSA) to yield shikimate (SA). In Psychrobacter cryohalolentis (strain ATCC BAA-1226 / DSM 17306 / VKM B-2378 / K5), this protein is Shikimate dehydrogenase (NADP(+)).